The sequence spans 378 residues: Integrator complex assembly factor WDR73 (378 aa).

WD repeat units follow at residues 73–113, 121–163, 167–205, 214–255, 266–305, and 322–371; these read DFKV…VWQV, KAVS…VVDL, KTTY…LVDT, NRSP…LLDP, QCPV…VYDA, and EPLF…VWDW.

This sequence belongs to the WD repeat WDR73 family. As to quaternary structure, interacts with INTS9 and INTS11; the interaction is direct. Part of the multiprotein complex composed of BRAT1, WDR73, as well as integrator complex subunits INTS9 and INTS11. As to expression, expressed in kidney and brain. In the kidney, expressed in glomeruli, most probably in podocytes, and in tubules (at protein level). In the brain, expressed in the cerebellum, with high levels in Purkinje cells and their projecting axons, in the deep cerebellar nuclei and in pyramidal neurons of the cerebral cortex (at protein level). In the white matter, mainly present in astrocytes, but not in oligodendrocytes (at protein level). Also highly expressed in endothelial cells of cerebral capillaries (at protein level).

It is found in the cytoplasm. Its subcellular location is the cytoskeleton. It localises to the spindle. The protein resides in the spindle pole. The protein localises to the cleavage furrow. In terms of biological role, component of a multiprotein complex required for the assembly of the RNA endonuclease module of the integrator complex. Associates with INTS9 and INTS11 in the cytoplasm, stabilizing the INTS9-INTS11 heterodimer and blocking the active site of INTS11. BRAT1 then joins the complex and plugs the active site of INTS11, leading to WDR73 release and nuclear import of INTS9 and INTS11. The polypeptide is Integrator complex assembly factor WDR73 (Homo sapiens (Human)).